We begin with the raw amino-acid sequence, 479 residues long: Glutamate--tRNA ligase 2 (479 aa).

The 'HIGH' region signature appears at 10–20 (PSPTGSLHIGG). A 'KMSKS' region motif is present at residues 243 to 247 (KLSKR). Lysine 246 contacts ATP.

It belongs to the class-I aminoacyl-tRNA synthetase family. Glutamate--tRNA ligase type 1 subfamily. In terms of assembly, monomer.

It is found in the cytoplasm. It carries out the reaction tRNA(Glu) + L-glutamate + ATP = L-glutamyl-tRNA(Glu) + AMP + diphosphate. Functionally, catalyzes the attachment of glutamate to tRNA(Glu) in a two-step reaction: glutamate is first activated by ATP to form Glu-AMP and then transferred to the acceptor end of tRNA(Glu). In Thermoanaerobacter pseudethanolicus (strain ATCC 33223 / 39E) (Clostridium thermohydrosulfuricum), this protein is Glutamate--tRNA ligase 2.